A 434-amino-acid chain; its full sequence is Peptidase B (434 aa).

Mn(2+) contacts are provided by K198 and D203. K210 is an active-site residue. D221, D280, and E282 together coordinate Mn(2+). Residue R284 is part of the active site.

This sequence belongs to the peptidase M17 family. In terms of assembly, homohexamer. It depends on Mn(2+) as a cofactor.

It localises to the cytoplasm. The enzyme catalyses Release of an N-terminal amino acid, Xaa, from a peptide or arylamide. Xaa is preferably Glu or Asp but may be other amino acids, including Leu, Met, His, Cys and Gln.. Probably plays an important role in intracellular peptide degradation. The sequence is that of Peptidase B from Pasteurella multocida (strain Pm70).